The chain runs to 320 residues: Nodulation efficiency protein NfeD (320 aa).

This sequence belongs to the ornithine cyclodeaminase/mu-crystallin family.

Seems to be involved in the nodulation efficiency of R.meliloti GR4 on alfalfa roots. The protein is Nodulation efficiency protein NfeD of Rhizobium meliloti (Ensifer meliloti).